The sequence spans 357 residues: DNA replication and repair protein RecF (357 aa).

An ATP-binding site is contributed by 30–37 (GANGSGKT).

This sequence belongs to the RecF family.

Its subcellular location is the cytoplasm. In terms of biological role, the RecF protein is involved in DNA metabolism; it is required for DNA replication and normal SOS inducibility. RecF binds preferentially to single-stranded, linear DNA. It also seems to bind ATP. This is DNA replication and repair protein RecF from Klebsiella pneumoniae subsp. pneumoniae (strain ATCC 700721 / MGH 78578).